Here is a 253-residue protein sequence, read N- to C-terminus: Probable transcriptional regulatory protein Mlut_12910 (253 aa).

It belongs to the TACO1 family.

It localises to the cytoplasm. This chain is Probable transcriptional regulatory protein Mlut_12910, found in Micrococcus luteus (strain ATCC 4698 / DSM 20030 / JCM 1464 / CCM 169 / CCUG 5858 / IAM 1056 / NBRC 3333 / NCIMB 9278 / NCTC 2665 / VKM Ac-2230) (Micrococcus lysodeikticus).